The sequence spans 4699 residues: PKS-NRPS hybrid synthetase cheA (4699 aa).

A compositionally biased stretch (acidic residues) spans 1-21 (MSDNDDEWNGFSDDNGEDDGP). Disordered stretches follow at residues 1-38 (MSDN…WDVP) and 136-165 (DGWR…HTQH). Positions 136–148 (DGWRFHSHPDPQH) are enriched in basic and acidic residues. An N-terminal acylcarrier protein transacylase domain (SAT) region spans residues 172–520 (SLDTIAELSN…VQQNVEEMAK (349 aa)). Residues 625 to 836 (PLPSVEDNVA…AGAPGARVTR (212 aa)) form a disordered region. Residues 674-688 (TQGSQGSQGRRTPGS) show a composition bias toward low complexity. Residues 724–737 (PKRRGRPPGSKNKK) show a composition bias toward basic residues. The region spanning 737–1138 (KKDQAPAPAE…GANAHAILEA (402 aa)) is the Ketosynthase family 3 (KS3) domain. A compositionally biased stretch (low complexity) spans 764-777 (ASAPRRGLRAAPAA). Polar residues predominate over residues 802–816 (ATASTPRAQSDQGTG). Residues cysteine 873, histidine 1012, and histidine 1058 each act as for beta-ketoacyl synthase activity in the active site. The malonyl-CoA:ACP transacylase (MAT) domain stretch occupies residues 1250-1573 (VFTGQGAQWP…VGTLLRQRDA (324 aa)). The N-terminal hotdog fold stretch occupies residues 1644–1777 (NELLGTRIMD…ANLIISLGEP (134 aa)). Residues 1644–1947 (NELLGTRIMD…TKPLVPPTPS (304 aa)) enclose the PKS/mFAS DH domain. Positions 1645 to 1941 (ELLGTRIMDN…QLQGLHTKPL (297 aa)) are dehydratase (DH) domain. The active-site Proton acceptor; for dehydratase activity is histidine 1676. Residues 1794-1947 (MLDVPAERFY…TKPLVPPTPS (154 aa)) form a C-terminal hotdog fold region. Aspartate 1854 serves as the catalytic Proton donor; for dehydratase activity. Positions 2050–2241 (LNRFYIEALG…RNTGFSGADE (192 aa)) are methyltransferase (MT) domain. The tract at residues 2794–2967 (TYWLVGLTGG…PAAAVNIGAV (174 aa)) is ketoreductase (KR) domain. A Carrier 1 domain is found at 3076-3153 (DASEILEDAY…ALFELVKERA (78 aa)). The residue at position 3113 (serine 3113) is an O-(pantetheine 4'-phosphoryl)serine. The disordered stretch occupies residues 3164–3265 (EQPDQVKSPR…PVASSPDAGL (102 aa)). Composition is skewed to polar residues over residues 3200–3209 (SLDQGSSWDS) and 3218–3233 (GHDS…SSPI). Positions 3268–3696 (SVPLSFSQAR…PISRISKPPL (429 aa)) are condensation (C) domain. Residues 3730 to 4113 (IQAHPDKLAL…GGLILEGRID (384 aa)) form an adenylation (A) domain region. One can recognise a Carrier 2 domain in the interval 4236 to 4316 (EGLPAMQHLI…TMAALVASGS (81 aa)). The tract at residues 4241-4313 (MQHLIKQLWE…TLETMAALVA (73 aa)) is thiolation and peptide carrier (T) domain. Serine 4276 is subject to O-(pantetheine 4'-phosphoryl)serine. A reductase (R) domain region spans residues 4367-4598 (LTGSTGFLGR…ISVHTVAAAI (232 aa)).

The protein in the C-terminal section; belongs to the NRP synthetase family.

Its pathway is secondary metabolite biosynthesis. PKS-NRPS hybrid synthetase; part of the gene cluster that mediates the biosynthesis of chaetoglobosin A which has a unique inhibitory activity against actin polymerization in mammalian cells. Chaetoglobosin A and its intermediates are involved in the morphological differentiation of C.globosum. The first step of the pathway is the synthesis of prochaetoglobosin I via condensation of one acetyl-CoA, 8 malonyl-CoA, and a L-tryptophan molecule by the PKS-NRPS hybrid synthetase cheA, followed by reduction of backbone double bond to install desired geometry by the enoyl reductase cheB. Further multiple oxidation steps performed by the cytochrome P450 monooxygenases cheE and cheG, as well as by the FAD-linked oxidoreductase cheF, lead to the formation of chaetoglobosin A. Depending on the order of action of these reductases, distinct intermediates can be identified. Within the pathway, the cytochrome P450 monooxygenase cheE catalyzes a stereospecific epoxidation on prochaetoglobosin I, cytoglobosin D, and chaetoglobosin J intermediates. The FAD-linked oxidoreductase cheF performs dehydrogenation of the C-20 hydroxyl groups in the 20-dihyrochaetoglobosin A and cytoglobosin D intermediates. Finally, the cytochrome P450 monooxygenase cheG can catalyze the stereospecific dihydroxylation of prochaetoglobosin I and prochaetoglobosin IV at C-19 and C-20, respectively. The Diels-Alderase cheD may play a role in the post-PKS-NRPS biosynthetic steps catalyzing Diels-Alder cyclization. This chain is PKS-NRPS hybrid synthetase cheA, found in Chaetomium globosum (strain ATCC 6205 / CBS 148.51 / DSM 1962 / NBRC 6347 / NRRL 1970) (Soil fungus).